The primary structure comprises 1059 residues: Dihydropyrimidine dehydrogenase [NADP(+)] (1059 aa).

Positions 84–118 constitute a 4Fe-4S ferredoxin-type 1 domain; it reads ERGALKEAMRCLKCADAPCQKSCPTQLDVKSFITS. 8 residues coordinate [4Fe-4S] cluster: cysteine 94, cysteine 97, cysteine 102, cysteine 106, cysteine 145, cysteine 151, cysteine 155, and glutamine 171. Residues 207-211, 231-239, arginine 248, and leucine 274 contribute to the FAD site; these read GCGPA and EKRAYIGGL. Residues 354–357, 378–379, arginine 385, 451–453, and 495–501 each bind NADP(+); these read AGDT, RK, AFG, and DVAGVAE. Position 494-503 (494-503) interacts with FAD; sequence GDVAGVAETT. FMN contacts are provided by residues serine 564 and 588–589; that span reads KT. Substrate contacts are provided by residues asparagine 623 and 682–684; that span reads NLS. Cysteine 685 functions as the Proton acceptor in the catalytic mechanism. Position 723 (lysine 723) interacts with FMN. 750–751 is a substrate binding site; that stretch reads NT. FMN is bound by residues glycine 781, 807-809, and 830-831; these read TGG and CS. 2 4Fe-4S ferredoxin-type domains span residues 955-987 and 989-1019; these read KVAI…FDPV and HQPH…MVPR. 8 residues coordinate [4Fe-4S] cluster: cysteine 964, cysteine 967, cysteine 970, cysteine 974, cysteine 998, cysteine 1001, cysteine 1004, and cysteine 1008.

It belongs to the dihydropyrimidine dehydrogenase family. [4Fe-4S] cluster is required as a cofactor. Requires FAD as cofactor. The cofactor is FMN.

The catalysed reaction is 5,6-dihydrouracil + NADP(+) = uracil + NADPH + H(+). The protein operates within amino-acid biosynthesis; beta-alanine biosynthesis. Functionally, involved in pyrimidine base degradation. Catalyzes the reduction of uracil and thymine. Involved in the degradation of the chemotherapeutic drug 5-fluorouracil. In Caenorhabditis elegans, this protein is Dihydropyrimidine dehydrogenase [NADP(+)] (dpyd-1).